A 359-amino-acid polypeptide reads, in one-letter code: MAGHLASDFAFSPPPGGGGDGPWGAEPGWVDPLTWLSFQGPPGGPGIGPGVGPGSEVWGIPPCPPPYELCGGMAYCGPQVGVGLVPQGGLETSQPESEAGVGVESNSNGASPEPCTVPPGAVKLEKEKLEQNPEKSQDIKALQKELEQFAKLLKQKRITLGYTQADVGLILGVLFGKVFSQKTICRFEALQLSFKNMCKLRPLLQKWVEEADNNENLQEICKAETLMQARKRKRTSIENRVRGNLENLFLQCPKPTLQISHIAQQLGLEKDVVRVWFCNRRQKGKRSSSDYAQREDFEAAGSPFSGGPVSFPPAPGPHFGTPGYGSPHFTALYSSVPFPEGEVFPPVSVITLGSPMHSN.

Disordered stretches follow at residues 1 to 53 (MAGH…GVGP) and 87 to 116 (QGGL…EPCT). A Phosphoserine modification is found at Ser111. The POU-specific domain maps to 138-212 (DIKALQKELE…LLQKWVEEAD (75 aa)). Residues 229–288 (ARKRKRTSIENRVRGNLENLFLQCPKPTLQISHIAQQLGLEKDVVRVWFCNRRQKGKRSS) constitute a DNA-binding region (homeobox). Phosphothreonine is present on Thr235. Phosphoserine occurs at positions 236, 288, and 289. The tract at residues 287–322 (SSSDYAQREDFEAAGSPFSGGPVSFPPAPGPHFGTP) is disordered. Positions 299 to 309 (AAGSPFSGGPV) are enriched in low complexity. Ser354 bears the Phosphoserine mark.

Belongs to the POU transcription factor family. Class-5 subfamily. In terms of tissue distribution, detected in epithelial cells of the prostate (at protein level). Detected at the mRNA level in several cancer tissues (breast, uterine cervix, lung, thyroid gland, esophagus, colon, urinary bladder, and glioma).

It localises to the nucleus. Its subcellular location is the cytoplasm. Functionally, shows weak transcriptional activator activity. The chain is POU domain, class 5, transcription factor 1B (POU5F1B) from Homo sapiens (Human).